The primary structure comprises 144 residues: MKLNDLSPAPGSRREKHRPGRGIGSGLGKTGGRGHKGQTSRSGGTIAPGFEGGQQPLHRRLPKFGFVSLKAMDRAEVRLSELAKVEGDIVTVQSLKDANVINQNVQRVKIMLSGEVTRAVTIKGIAATKGARAAIEAAGGKFEE.

A disordered region spans residues 1 to 57 (MKLNDLSPAPGSRREKHRPGRGIGSGLGKTGGRGHKGQTSRSGGTIAPGFEGGQQPL). Residues 21–31 (RGIGSGLGKTG) are compositionally biased toward gly residues.

It belongs to the universal ribosomal protein uL15 family. As to quaternary structure, part of the 50S ribosomal subunit.

In terms of biological role, binds to the 23S rRNA. The polypeptide is Large ribosomal subunit protein uL15 (Pseudomonas fluorescens (strain ATCC BAA-477 / NRRL B-23932 / Pf-5)).